A 484-amino-acid polypeptide reads, in one-letter code: Cobyric acid synthase (484 aa).

The region spanning 251–438 is the GATase cobBQ-type domain; sequence ALKVAVPVLS…LHGLFGSDPY (188 aa). C333 serves as the catalytic Nucleophile. H430 is a catalytic residue.

Belongs to the CobB/CobQ family. CobQ subfamily.

Its pathway is cofactor biosynthesis; adenosylcobalamin biosynthesis. Catalyzes amidations at positions B, D, E, and G on adenosylcobyrinic A,C-diamide. NH(2) groups are provided by glutamine, and one molecule of ATP is hydrogenolyzed for each amidation. This chain is Cobyric acid synthase, found in Sinorhizobium medicae (strain WSM419) (Ensifer medicae).